A 257-amino-acid polypeptide reads, in one-letter code: MTFTVLIPARLASTRLPNKPLADIGGAPMVVRVAQRVLSGAGLAGRVRVVVAGDSPLIIEACQVHGIEAVLTRTDHPSGSDRLAEACDLLRLGDDEIVVNVQGDEPLIDPSLVAAVAGLLLNQPAASMSTAAHAINSEAEFNNRNVVKVVLDAQGLALYFSRAPIPCWRDQPLSANDSAALPSPPPLRHIGLYAYRVGFLRRFPTLAQAPIEITESLEQLRALWHGYRIAVHIAPHAPGPGVDTPEDLERVRHLFGA.

It belongs to the KdsB family.

The protein resides in the cytoplasm. It catalyses the reaction 3-deoxy-alpha-D-manno-oct-2-ulosonate + CTP = CMP-3-deoxy-beta-D-manno-octulosonate + diphosphate. The protein operates within nucleotide-sugar biosynthesis; CMP-3-deoxy-D-manno-octulosonate biosynthesis; CMP-3-deoxy-D-manno-octulosonate from 3-deoxy-D-manno-octulosonate and CTP: step 1/1. Its pathway is bacterial outer membrane biogenesis; lipopolysaccharide biosynthesis. In terms of biological role, activates KDO (a required 8-carbon sugar) for incorporation into bacterial lipopolysaccharide in Gram-negative bacteria. The protein is 3-deoxy-manno-octulosonate cytidylyltransferase of Albidiferax ferrireducens (strain ATCC BAA-621 / DSM 15236 / T118) (Rhodoferax ferrireducens).